A 240-amino-acid chain; its full sequence is Transcriptional regulatory protein ChvI (240 aa).

One can recognise a Response regulatory domain in the interval 3 to 116 (TIALVDDDRN…LLVERVKAIL (114 aa)). Residues Asp8, Asp9, and Asp52 each contribute to the Mg(2+) site. Asp52 is modified (4-aspartylphosphate). The segment at residues 139–238 (SRSLERGQLV…LYGVGYRFRE (100 aa)) is a DNA-binding region (ompR/PhoB-type).

It depends on Mg(2+) as a cofactor. Phosphorylated by ChvG.

It is found in the cytoplasm. It participates in glycan metabolism; exopolysaccharide biosynthesis. Member of a two-component regulatory system ChvG(ExoS)/ChvI involved in regulating the production of succinoglycan. This chain is Transcriptional regulatory protein ChvI (chvI), found in Rhizobium meliloti (strain 1021) (Ensifer meliloti).